A 612-amino-acid chain; its full sequence is UPF0329 protein ECU05_1680/ECU11_0050 (612 aa).

The segment covering R304–K330 has biased composition (basic and acidic residues). The interval R304–V424 is disordered. The span at E331–E349 shows a compositional bias: basic residues. Residues E350–E388 are compositionally biased toward basic and acidic residues.

It belongs to the UPF0329 family.

This is UPF0329 protein ECU05_1680/ECU11_0050 from Encephalitozoon cuniculi (strain GB-M1) (Microsporidian parasite).